A 387-amino-acid polypeptide reads, in one-letter code: Chaperone protein DnaJ (387 aa).

The 66-residue stretch at 5–70 (DYYEVLGVAK…QKRAAYDRFG (66 aa)) folds into the J domain. A CR-type zinc finger spans residues 140–218 (GKTETIRLPT…CGGAGRVTRE (79 aa)). Zn(2+) contacts are provided by C153, C156, C170, C173, C192, C195, C206, and C209. CXXCXGXG motif repeat units lie at residues 153–160 (CEVCAGSG), 170–177 (CPTCGGYG), 192–199 (CPNCQGRG), and 206–213 (CAACGGAG).

It belongs to the DnaJ family. In terms of assembly, homodimer. Requires Zn(2+) as cofactor.

The protein resides in the cytoplasm. Functionally, participates actively in the response to hyperosmotic and heat shock by preventing the aggregation of stress-denatured proteins and by disaggregating proteins, also in an autonomous, DnaK-independent fashion. Unfolded proteins bind initially to DnaJ; upon interaction with the DnaJ-bound protein, DnaK hydrolyzes its bound ATP, resulting in the formation of a stable complex. GrpE releases ADP from DnaK; ATP binding to DnaK triggers the release of the substrate protein, thus completing the reaction cycle. Several rounds of ATP-dependent interactions between DnaJ, DnaK and GrpE are required for fully efficient folding. Also involved, together with DnaK and GrpE, in the DNA replication of plasmids through activation of initiation proteins. This chain is Chaperone protein DnaJ, found in Methylobacterium sp. (strain 4-46).